Reading from the N-terminus, the 206-residue chain is MSRPHFQFETDLAARGYLRIAGVDEVGRGPLAGPVMAAAVVLDPGAIPEGLNDSKQVTAKRREALAAQLAQVAQVGVGVAEVAEIDRLNIRRAAHLAMLRALDALPAPPDMALIDGRDRPDDLPCAAHAIIKGDTKSLSIAAASIVAKVARDRVMTALAAEFPGYGWETNAGYPTQAHRAALLDIGVSPHHRRSFRPVHNILYQEK.

The RNase H type-2 domain maps to 18–206; it reads LRIAGVDEVG…PVHNILYQEK (189 aa). Positions 24, 25, and 115 each coordinate a divalent metal cation.

It belongs to the RNase HII family. The cofactor is Mn(2+). It depends on Mg(2+) as a cofactor.

It is found in the cytoplasm. The enzyme catalyses Endonucleolytic cleavage to 5'-phosphomonoester.. In terms of biological role, endonuclease that specifically degrades the RNA of RNA-DNA hybrids. The chain is Ribonuclease HII from Dinoroseobacter shibae (strain DSM 16493 / NCIMB 14021 / DFL 12).